Consider the following 593-residue polypeptide: Methionine--tRNA ligase, mitochondrial (593 aa).

A mitochondrion-targeting transit peptide spans 1 to 29 (MLRTSVLRLLGRTGASRLSLLEDFGPRYY). The short motif at 52–62 (FYVNAAPHIGH) is the 'HIGH' region element. The 'KMSKS' region motif lies at 347 to 351 (KMSKS). Position 350 (Lys-350) interacts with ATP.

It belongs to the class-I aminoacyl-tRNA synthetase family.

It localises to the mitochondrion matrix. The enzyme catalyses tRNA(Met) + L-methionine + ATP = L-methionyl-tRNA(Met) + AMP + diphosphate. This Homo sapiens (Human) protein is Methionine--tRNA ligase, mitochondrial (MARS2).